The primary structure comprises 984 residues: Mineralocorticoid receptor (984 aa).

Positions 1 to 602 are modulating; the sequence is METKGYHSLP…STGSSRPSKI (602 aa). A compositionally biased stretch (polar residues) spans 231–243; that stretch reads QGTPLTCSPNVEN. 2 disordered regions span residues 231 to 329 and 346 to 369; these read QGTP…AAST and SGTS…EKGA. Ser250, Ser259, Ser283, Ser287, and Ser299 each carry phosphoserine. Positions 259 to 291 are enriched in low complexity; that stretch reads SPLSSPLSSMKSSISSPPSHCSVKSPVSSPNNV. A compositionally biased stretch (polar residues) spans 292 to 329; it reads TLRSSVSSPANINNSRCSVSSPSNTNNRSTLSSPAAST. Low complexity predominate over residues 346-355; it reads SGTSAGSSTS. Cys603, Cys606, Cys620, Cys623, Cys639, Cys645, Cys655, and Cys658 together coordinate Zn(2+). NR C4-type zinc fingers lie at residues 603–623 and 639–663; these read CLVC…CGSC and CAGR…LQKC. Residues 603-668 constitute a DNA-binding region (nuclear receptor); sequence CLVCGDEASG…RLQKCLQAGM (66 aa). The tract at residues 669–725 is hinge; sequence NLGARKSKKLGKLKGIHEEQPQQQQPPPPPPPPQSPEEGTTYIAPAKEPSVNTALVP. Residues 684 to 710 are disordered; the sequence is IHEEQPQQQQPPPPPPPPQSPEEGTTY. A compositionally biased stretch (pro residues) spans 692–703; that stretch reads QQPPPPPPPPQS. Residues 726–964 enclose the NR LBD domain; that stretch reads QLSTISRALT…EFPAMLVEII (239 aa). 21-hydroxyprogesterone contacts are provided by Asn770 and Gln776. Aldosterone contacts are provided by Asn770 and Gln776. The progesterone site is built by Asn770 and Gln776. Positions 782–785 are important for coactivator binding; it reads KWAK. 21-hydroxyprogesterone-binding residues include Arg817 and Thr945. Residues Arg817 and Thr945 each coordinate aldosterone. Residues Arg817 and Thr945 each contribute to the progesterone site.

Belongs to the nuclear hormone receptor family. NR3 subfamily. In terms of assembly, heteromultimeric cytoplasmic complex with HSP90, HSP70, and FKBP4, in the absence of ligand. After ligand binding, it translocates to the nucleus and binds to DNA as a homodimer and as a heterodimer with NR3C1. Binds the coactivator NCOA2. May interact with HSD11B2 in the absence of ligand. Binds the coactivators NCOA1, TIF1 and NRIP1. Phosphorylated.

It is found in the cytoplasm. Its subcellular location is the nucleus. The protein localises to the endoplasmic reticulum membrane. In terms of biological role, receptor for both mineralocorticoids (MC) such as aldosterone and glucocorticoids (GC) such as corticosterone or cortisol. Binds to mineralocorticoid response elements (MRE) and transactivates target genes. The effect of MC is to increase ion and water transport and thus raise extracellular fluid volume and blood pressure and lower potassium levels. This Aotus nancymaae (Ma's night monkey) protein is Mineralocorticoid receptor (NR3C2).